A 463-amino-acid chain; its full sequence is MSIFFSPSSPTLFFSTTNANPRVSPSSSPSSAFTPPLSSSRLRPILRGFPCLAFSAPANAAHGTAETVHGNKWPSPSSSSSAATQPSAGSDHGHSRTFIDARSEQDLLSGIQRELEAGTLPKHIAQAMEELYQNYKNAVLQSAAPHAEDIVLSNMRVAFDRMFLDVKEPFEFSPYHEAILEPFNYYMFGQNYIRPLVNFRESYVGNVSVFGVMEEQLKQGDKVVLISNHQTEADPAVIALMLETTNPHISENIIYVAGDRVITDPLCKPFSMGRNLLCVYSKKHMNDVPELAEMKKRSNTRSLKGRMALLLRGGSKIIWIAPSGGRDRPDPITNQWFPAPFDATSLDNMRRLVDHAGLVGHIYPLAILCHDIMPPPLQVEKEIGEKSWISFHGTGISVAPEINFQEVTASCGSPEEAKAAYSQALYDSVCEQYKVLHSAVHGGKGLEASTPSVSLSQPLQFLD.

The transit peptide at 1–91 (MSIFFSPSSP…AATQPSAGSD (91 aa)) directs the protein to the chloroplast. Disordered regions lie at residues 18-37 (NANP…TPPL) and 65-95 (AETV…HGHS). 2 stretches are compositionally biased toward low complexity: residues 24–37 (SPSS…TPPL) and 74–90 (PSPS…SAGS). The HXXXXD motif signature appears at 229–234 (HQTEAD).

It belongs to the GPAT/DAPAT family.

It localises to the plastid. It is found in the chloroplast stroma. It carries out the reaction sn-glycerol 3-phosphate + an acyl-CoA = a 1-acyl-sn-glycero-3-phosphate + CoA. Its pathway is phospholipid metabolism; CDP-diacylglycerol biosynthesis; CDP-diacylglycerol from sn-glycerol 3-phosphate: step 1/3. In terms of biological role, esterifies acyl-group from acyl-ACP to the sn-1 position of glycerol-3-phosphate. The enzyme from chilling-resistant plants discriminates against non-fluid palmitic acid and selects oleic acid whereas the enzyme from sensitive plants accepts both fatty acids. The chain is Glycerol-3-phosphate acyltransferase, chloroplastic from Carthamus tinctorius (Safflower).